The sequence spans 392 residues: NADH-quinone oxidoreductase subunit D (392 aa).

It belongs to the complex I 49 kDa subunit family. As to quaternary structure, NDH-1 is composed of 14 different subunits. Subunits NuoB, C, D, E, F, and G constitute the peripheral sector of the complex.

The protein localises to the cell inner membrane. It carries out the reaction a quinone + NADH + 5 H(+)(in) = a quinol + NAD(+) + 4 H(+)(out). Its function is as follows. NDH-1 shuttles electrons from NADH, via FMN and iron-sulfur (Fe-S) centers, to quinones in the respiratory chain. The immediate electron acceptor for the enzyme in this species is believed to be ubiquinone. Couples the redox reaction to proton translocation (for every two electrons transferred, four hydrogen ions are translocated across the cytoplasmic membrane), and thus conserves the redox energy in a proton gradient. The protein is NADH-quinone oxidoreductase subunit D of Paramagnetospirillum magneticum (strain ATCC 700264 / AMB-1) (Magnetospirillum magneticum).